The chain runs to 96 residues: Large ribosomal subunit protein eL21 (96 aa).

Belongs to the eukaryotic ribosomal protein eL21 family.

The polypeptide is Large ribosomal subunit protein eL21 (Methanoregula boonei (strain DSM 21154 / JCM 14090 / 6A8)).